The sequence spans 764 residues: PFL-like enzyme TdcE (764 aa).

Positions T7–R629 constitute a PFL domain. C423 acts as the S-acetylcysteine intermediate in catalysis. The active-site Cysteine radical intermediate is C424. The tract at residues G622–D645 is disordered. The Glycine radical domain occupies P636–L764. G739 is modified (glycine radical).

It belongs to the glycyl radical enzyme (GRE) family. PFL subfamily.

The protein localises to the cytoplasm. It catalyses the reaction 2-oxobutanoate + CoA = propanoyl-CoA + formate. The enzyme catalyses formate + acetyl-CoA = pyruvate + CoA. It participates in amino-acid degradation; L-threonine degradation via propanoate pathway; propanoate from L-threonine: step 2/4. With respect to regulation, dependent on PFL-activase. Its function is as follows. Catalyzes the cleavage of 2-ketobutyrate to propionyl-CoA and formate. It can also use pyruvate as substrate. The polypeptide is PFL-like enzyme TdcE (tdcE) (Escherichia coli (strain K12)).